The sequence spans 106 residues: Replication restart protein PriB (106 aa).

The SSB domain maps to 4–103; the sequence is TNRLVLSGTV…LHAEQIEFID (100 aa).

Belongs to the PriB family. In terms of assembly, homodimer. Interacts with PriA and DnaT. Component of the replication restart primosome. Primosome assembly occurs via a 'hand-off' mechanism. PriA binds to replication forks, subsequently PriB then DnaT bind; DnaT then displaces ssDNA to generate the helicase loading substrate.

Its function is as follows. Involved in the restart of stalled replication forks, which reloads the replicative helicase on sites other than the origin of replication; the PriA-PriB pathway is the major replication restart pathway. During primosome assembly it facilitates complex formation between PriA and DnaT on DNA; stabilizes PriA on DNA. Stimulates the DNA unwinding activity of PriA helicase. The chain is Replication restart protein PriB from Yersinia pestis.